We begin with the raw amino-acid sequence, 922 residues long: Dual serine/threonine and tyrosine protein kinase (922 aa).

Residues 645-899 (PKLGRELGRG…PLLGIVEPSL (255 aa)) enclose the Protein kinase domain. Residues 651-659 (LGRGQYGVV) and Lys674 each bind ATP. Asp770 serves as the catalytic Proton acceptor.

Belongs to the protein kinase superfamily. Ser/Thr protein kinase family.

The protein resides in the cytoplasm. It localises to the cell membrane. Its subcellular location is the apical cell membrane. It is found in the basolateral cell membrane. The protein localises to the cell junction. The catalysed reaction is L-seryl-[protein] + ATP = O-phospho-L-seryl-[protein] + ADP + H(+). It carries out the reaction L-threonyl-[protein] + ATP = O-phospho-L-threonyl-[protein] + ADP + H(+). The enzyme catalyses L-tyrosyl-[protein] + ATP = O-phospho-L-tyrosyl-[protein] + ADP + H(+). In terms of biological role, may act as a positive regulator of ERK phosphorylation downstream of fibroblast growth factor-receptor activation. May induce both caspase-dependent apoptosis and caspase-independent cell death. May play a role in the embryonic development. The polypeptide is Dual serine/threonine and tyrosine protein kinase (Tetraodon nigroviridis (Spotted green pufferfish)).